Reading from the N-terminus, the 660-residue chain is Bifunctional polymyxin resistance protein ArnA (660 aa).

Residues 1–304 are formyltransferase ArnAFT; sequence MKAVIFAYHD…TLGLVAGARL (304 aa). His104 functions as the Proton donor; for formyltransferase activity in the catalytic mechanism. (6R)-10-formyltetrahydrofolate-binding positions include Arg114 and 136–140; that span reads VKRAD. The tract at residues 314–660 is dehydrogenase ArnADH; the sequence is RRIRVLILGV…RSVDIAERAS (347 aa). NAD(+) is bound by residues Asp347 and 368-369; that span reads DI. UDP-alpha-D-glucuronate contacts are provided by residues Ala393, Tyr398, and 432-433; that span reads TS. The active-site Proton acceptor; for decarboxylase activity is Glu434. Residues Arg460, Asn492, 526-535, and Tyr613 each bind UDP-alpha-D-glucuronate; that span reads KLIDGGQQKR. The Proton donor; for decarboxylase activity role is filled by Arg619.

It in the N-terminal section; belongs to the Fmt family. UDP-L-Ara4N formyltransferase subfamily. This sequence in the C-terminal section; belongs to the NAD(P)-dependent epimerase/dehydratase family. UDP-glucuronic acid decarboxylase subfamily. In terms of assembly, homohexamer, formed by a dimer of trimers.

The enzyme catalyses UDP-alpha-D-glucuronate + NAD(+) = UDP-beta-L-threo-pentopyranos-4-ulose + CO2 + NADH. It catalyses the reaction UDP-4-amino-4-deoxy-beta-L-arabinose + (6R)-10-formyltetrahydrofolate = UDP-4-deoxy-4-formamido-beta-L-arabinose + (6S)-5,6,7,8-tetrahydrofolate + H(+). Its pathway is nucleotide-sugar biosynthesis; UDP-4-deoxy-4-formamido-beta-L-arabinose biosynthesis; UDP-4-deoxy-4-formamido-beta-L-arabinose from UDP-alpha-D-glucuronate: step 1/3. It participates in nucleotide-sugar biosynthesis; UDP-4-deoxy-4-formamido-beta-L-arabinose biosynthesis; UDP-4-deoxy-4-formamido-beta-L-arabinose from UDP-alpha-D-glucuronate: step 3/3. It functions in the pathway bacterial outer membrane biogenesis; lipopolysaccharide biosynthesis. Functionally, bifunctional enzyme that catalyzes the oxidative decarboxylation of UDP-glucuronic acid (UDP-GlcUA) to UDP-4-keto-arabinose (UDP-Ara4O) and the addition of a formyl group to UDP-4-amino-4-deoxy-L-arabinose (UDP-L-Ara4N) to form UDP-L-4-formamido-arabinose (UDP-L-Ara4FN). The modified arabinose is attached to lipid A and is required for resistance to polymyxin and cationic antimicrobial peptides. The sequence is that of Bifunctional polymyxin resistance protein ArnA (arnA) from Salmonella typhimurium (strain LT2 / SGSC1412 / ATCC 700720).